Consider the following 460-residue polypeptide: Cysteine--tRNA ligase (460 aa).

C28 provides a ligand contact to Zn(2+). The 'HIGH' region motif lies at 30-40; the sequence is MTVYDYCHLGH. C209, H234, and E238 together coordinate Zn(2+). The 'KMSKS' region signature appears at 266 to 270; that stretch reads KMSKS. K269 lines the ATP pocket.

It belongs to the class-I aminoacyl-tRNA synthetase family. As to quaternary structure, monomer. The cofactor is Zn(2+).

It localises to the cytoplasm. The catalysed reaction is tRNA(Cys) + L-cysteine + ATP = L-cysteinyl-tRNA(Cys) + AMP + diphosphate. This is Cysteine--tRNA ligase from Pseudomonas aeruginosa (strain LESB58).